The chain runs to 124 residues: Small ribosomal subunit protein uS12 (124 aa).

The disordered stretch occupies residues 105–124 (SGVNDRRQGRSKYGAKRPKS). The segment covering 113-124 (GRSKYGAKRPKS) has biased composition (basic residues).

Belongs to the universal ribosomal protein uS12 family. As to quaternary structure, part of the 30S ribosomal subunit. Contacts proteins S8 and S17. May interact with IF1 in the 30S initiation complex.

In terms of biological role, with S4 and S5 plays an important role in translational accuracy. Functionally, interacts with and stabilizes bases of the 16S rRNA that are involved in tRNA selection in the A site and with the mRNA backbone. Located at the interface of the 30S and 50S subunits, it traverses the body of the 30S subunit contacting proteins on the other side and probably holding the rRNA structure together. The combined cluster of proteins S8, S12 and S17 appears to hold together the shoulder and platform of the 30S subunit. This is Small ribosomal subunit protein uS12 from Idiomarina loihiensis (strain ATCC BAA-735 / DSM 15497 / L2-TR).